Consider the following 742-residue polypeptide: Probable serine/threonine-protein kinase PkwA (742 aa).

Positions Y16–T266 constitute a Protein kinase domain. ATP-binding positions include L22 to V30 and K44. D138 acts as the Proton acceptor in catalysis. The disordered stretch occupies residues T266–P394. Positions E301–D318 are enriched in pro residues. Positions L343 to R356 are enriched in basic and acidic residues. Residues P377–Q392 are compositionally biased toward pro residues. 7 WD repeats span residues I455–T496, L497–V538, F539–V580, L581–D621, V622–T663, F664–T705, and L706–E742.

This sequence belongs to the protein kinase superfamily. Ser/Thr protein kinase family.

It catalyses the reaction L-seryl-[protein] + ATP = O-phospho-L-seryl-[protein] + ADP + H(+). The enzyme catalyses L-threonyl-[protein] + ATP = O-phospho-L-threonyl-[protein] + ADP + H(+). Functionally, may play a regulatory role during the complex growth cycle and in secondary metabolite production. This chain is Probable serine/threonine-protein kinase PkwA (pkwA), found in Thermomonospora curvata.